Here is a 338-residue protein sequence, read N- to C-terminus: Phenylalanine--tRNA ligase alpha subunit (338 aa).

Glutamate 252 lines the Mg(2+) pocket.

This sequence belongs to the class-II aminoacyl-tRNA synthetase family. Phe-tRNA synthetase alpha subunit type 1 subfamily. Tetramer of two alpha and two beta subunits. Requires Mg(2+) as cofactor.

It localises to the cytoplasm. The catalysed reaction is tRNA(Phe) + L-phenylalanine + ATP = L-phenylalanyl-tRNA(Phe) + AMP + diphosphate + H(+). The polypeptide is Phenylalanine--tRNA ligase alpha subunit (Pseudomonas fluorescens (strain ATCC BAA-477 / NRRL B-23932 / Pf-5)).